Here is a 609-residue protein sequence, read N- to C-terminus: UvrABC system protein C (609 aa).

Residues Ser15 to Val93 form the GIY-YIG domain. The region spanning Gln202–Val237 is the UVR domain.

This sequence belongs to the UvrC family. As to quaternary structure, interacts with UvrB in an incision complex.

It localises to the cytoplasm. The UvrABC repair system catalyzes the recognition and processing of DNA lesions. UvrC both incises the 5' and 3' sides of the lesion. The N-terminal half is responsible for the 3' incision and the C-terminal half is responsible for the 5' incision. This is UvrABC system protein C from Shewanella denitrificans (strain OS217 / ATCC BAA-1090 / DSM 15013).